A 326-amino-acid chain; its full sequence is Interleukin-1-binding protein (326 aa).

Positions 1-18 (MSILPVIFLSIFFYSSFV) are cleaved as a signal peptide. Ig-like domains follow at residues 24–115 (PECI…LNLT), 122–212 (SNID…RIVK), and 221–322 (PSTM…KTVT). The cysteines at positions 48 and 99 are disulfide-linked. 3 N-linked (GlcNAc...) asparagine; by host glycosylation sites follow: Asn-80, Asn-103, and Asn-113. Cysteines 143 and 194 form a disulfide. N-linked (GlcNAc...) asparagine; by host glycans are attached at residues Asn-206 and Asn-237. A disulfide bridge connects residues Cys-242 and Cys-309.

It belongs to the interleukin-1 receptor family. In terms of assembly, interacts with mouse Il1b.

The protein localises to the secreted. In terms of biological role, may reduce the host inflammatory response by interacting with inteleukin-1 beta (Il1b) and thus decreasing the association between IL1B and its cellular receptor. This Vaccinia virus (strain Western Reserve) (VACV) protein is Interleukin-1-binding protein (OPG201).